We begin with the raw amino-acid sequence, 65 residues long: Large ribosomal subunit protein bL35 (65 aa).

This sequence belongs to the bacterial ribosomal protein bL35 family.

The protein is Large ribosomal subunit protein bL35 of Caldicellulosiruptor bescii (strain ATCC BAA-1888 / DSM 6725 / KCTC 15123 / Z-1320) (Anaerocellum thermophilum).